We begin with the raw amino-acid sequence, 157 residues long: 2-C-methyl-D-erythritol 2,4-cyclodiphosphate synthase (157 aa).

A divalent metal cation is bound by residues Asp8, His10, and His42. Asp8–His10 serves as a coordination point for 4-CDP-2-C-methyl-D-erythritol 2-phosphate. 4-CDP-2-C-methyl-D-erythritol 2-phosphate contacts are provided by residues Asp56–Gly58, Ser132–Glu135, Phe139, and Arg142.

Belongs to the IspF family. As to quaternary structure, homotrimer. A divalent metal cation serves as cofactor.

It carries out the reaction 4-CDP-2-C-methyl-D-erythritol 2-phosphate = 2-C-methyl-D-erythritol 2,4-cyclic diphosphate + CMP. Its pathway is isoprenoid biosynthesis; isopentenyl diphosphate biosynthesis via DXP pathway; isopentenyl diphosphate from 1-deoxy-D-xylulose 5-phosphate: step 4/6. Its function is as follows. Involved in the biosynthesis of isopentenyl diphosphate (IPP) and dimethylallyl diphosphate (DMAPP), two major building blocks of isoprenoid compounds. Catalyzes the conversion of 4-diphosphocytidyl-2-C-methyl-D-erythritol 2-phosphate (CDP-ME2P) to 2-C-methyl-D-erythritol 2,4-cyclodiphosphate (ME-CPP) with a corresponding release of cytidine 5-monophosphate (CMP). This chain is 2-C-methyl-D-erythritol 2,4-cyclodiphosphate synthase, found in Dehalococcoides mccartyi (strain ATCC BAA-2266 / KCTC 15142 / 195) (Dehalococcoides ethenogenes (strain 195)).